The sequence spans 191 residues: Protein G1-like1 (191 aa).

Positions 1–29 (MDMIGMASPAESPGGGGTARPSRYESQKR) are disordered. Residues 23–150 (RYESQKRRDW…ARGIAYEKKR (128 aa)) enclose the ALOG domain. The short motif at 148 to 152 (KKRRK) is the Nuclear localization signal element. Positions 152 to 179 (KRAAASHTKQKQQQQQLVEQAAAAAEAH) form a coiled coil.

This sequence belongs to the plant homeotic and developmental regulators ALOG protein family.

The protein localises to the nucleus. Its function is as follows. Probable transcription regulator that acts as a developmental regulator by promoting cell growth in response to light. This chain is Protein G1-like1, found in Oryza sativa subsp. indica (Rice).